The sequence spans 544 residues: Chaperonin GroEL (544 aa).

ATP-binding positions include 29–32, Lys50, 86–90, Gly415, and Asp495; these read TLGP and DGTTT.

This sequence belongs to the chaperonin (HSP60) family. As to quaternary structure, forms a cylinder of 14 subunits composed of two heptameric rings stacked back-to-back. Interacts with the co-chaperonin GroES.

It localises to the cytoplasm. The enzyme catalyses ATP + H2O + a folded polypeptide = ADP + phosphate + an unfolded polypeptide.. In terms of biological role, together with its co-chaperonin GroES, plays an essential role in assisting protein folding. The GroEL-GroES system forms a nano-cage that allows encapsulation of the non-native substrate proteins and provides a physical environment optimized to promote and accelerate protein folding. The sequence is that of Chaperonin GroEL from Tannerella forsythia (Bacteroides forsythus).